We begin with the raw amino-acid sequence, 511 residues long: Maturase K (511 aa).

This sequence belongs to the intron maturase 2 family. MatK subfamily.

The protein localises to the plastid. The protein resides in the chloroplast. Its function is as follows. Usually encoded in the trnK tRNA gene intron. Probably assists in splicing its own and other chloroplast group II introns. This Bromelia plumieri (Karatas) protein is Maturase K.